Here is a 369-residue protein sequence, read N- to C-terminus: Anhydro-N-acetylmuramic acid kinase (369 aa).

12-19 (GTSMDGVD) serves as a coordination point for ATP.

The protein belongs to the anhydro-N-acetylmuramic acid kinase family.

The enzyme catalyses 1,6-anhydro-N-acetyl-beta-muramate + ATP + H2O = N-acetyl-D-muramate 6-phosphate + ADP + H(+). It functions in the pathway amino-sugar metabolism; 1,6-anhydro-N-acetylmuramate degradation. Its pathway is cell wall biogenesis; peptidoglycan recycling. In terms of biological role, catalyzes the specific phosphorylation of 1,6-anhydro-N-acetylmuramic acid (anhMurNAc) with the simultaneous cleavage of the 1,6-anhydro ring, generating MurNAc-6-P. Is required for the utilization of anhMurNAc either imported from the medium or derived from its own cell wall murein, and thus plays a role in cell wall recycling. The polypeptide is Anhydro-N-acetylmuramic acid kinase (Shewanella halifaxensis (strain HAW-EB4)).